The following is a 225-amino-acid chain: Urease accessory protein UreF (225 aa).

The protein belongs to the UreF family. As to quaternary structure, ureD, UreF and UreG form a complex that acts as a GTP-hydrolysis-dependent molecular chaperone, activating the urease apoprotein by helping to assemble the nickel containing metallocenter of UreC. The UreE protein probably delivers the nickel.

Its subcellular location is the cytoplasm. Functionally, required for maturation of urease via the functional incorporation of the urease nickel metallocenter. This chain is Urease accessory protein UreF, found in Arthrobacter sp. (strain FB24).